We begin with the raw amino-acid sequence, 458 residues long: tRNA modification GTPase MnmE (458 aa).

Positions 22, 86, and 125 each coordinate (6S)-5-formyl-5,6,7,8-tetrahydrofolate. A TrmE-type G domain is found at 221–379 (GIRTVILGRP…LEQTITEMFF (159 aa)). Position 231 (asparagine 231) interacts with K(+). Residues 231–236 (NAGKSS), 250–256 (TEIAGTT), and 275–278 (DTAG) contribute to the GTP site. Residue serine 235 participates in Mg(2+) binding. K(+)-binding residues include threonine 250, isoleucine 252, and threonine 255. Threonine 256 provides a ligand contact to Mg(2+). Position 458 (lysine 458) interacts with (6S)-5-formyl-5,6,7,8-tetrahydrofolate.

This sequence belongs to the TRAFAC class TrmE-Era-EngA-EngB-Septin-like GTPase superfamily. TrmE GTPase family. Homodimer. Heterotetramer of two MnmE and two MnmG subunits. It depends on K(+) as a cofactor.

The protein resides in the cytoplasm. Functionally, exhibits a very high intrinsic GTPase hydrolysis rate. Involved in the addition of a carboxymethylaminomethyl (cmnm) group at the wobble position (U34) of certain tRNAs, forming tRNA-cmnm(5)s(2)U34. This chain is tRNA modification GTPase MnmE, found in Lachnoclostridium phytofermentans (strain ATCC 700394 / DSM 18823 / ISDg) (Clostridium phytofermentans).